The primary structure comprises 585 residues: Arginine--tRNA ligase (585 aa).

The short motif at 126–136 (PNIAKEMHVGH) is the 'HIGH' region element.

It belongs to the class-I aminoacyl-tRNA synthetase family. As to quaternary structure, monomer.

It localises to the cytoplasm. The enzyme catalyses tRNA(Arg) + L-arginine + ATP = L-arginyl-tRNA(Arg) + AMP + diphosphate. The chain is Arginine--tRNA ligase from Rippkaea orientalis (strain PCC 8801 / RF-1) (Cyanothece sp. (strain PCC 8801)).